We begin with the raw amino-acid sequence, 210 residues long: Ras-related protein Rab-2-B (210 aa).

13 to 21 provides a ligand contact to GTP; it reads GDTGVGKSC. The Effector region motif lies at 35–43; that stretch reads HDLTIGVEF. Residues 61–65, 119–122, and 149–151 each bind GTP; these read DTAGQ, NKCD, and SAK. S-geranylgeranyl cysteine attachment occurs at residues cysteine 208 and cysteine 209.

It belongs to the small GTPase superfamily. Rab family.

It is found in the endoplasmic reticulum membrane. Its subcellular location is the golgi apparatus membrane. Protein transport. Probably involved in vesicular traffic. The sequence is that of Ras-related protein Rab-2-B (RAB2B) from Zea mays (Maize).